A 279-amino-acid chain; its full sequence is Dihydropteroate synthase type-1 (279 aa).

Residues 1 to 258 form the Pterin-binding domain; the sequence is MVTVFGILNL…APGDLRSAIT (258 aa). Mg(2+) is bound at residue Asn-9. (7,8-dihydropterin-6-yl)methyl diphosphate is bound by residues Asp-82, Asn-101, Asp-173, Lys-212, and 246 to 248; that span reads RTH.

This sequence belongs to the DHPS family. In terms of assembly, homodimer or homotrimer. Mg(2+) is required as a cofactor.

The catalysed reaction is (7,8-dihydropterin-6-yl)methyl diphosphate + 4-aminobenzoate = 7,8-dihydropteroate + diphosphate. The protein operates within cofactor biosynthesis; tetrahydrofolate biosynthesis; 7,8-dihydrofolate from 2-amino-4-hydroxy-6-hydroxymethyl-7,8-dihydropteridine diphosphate and 4-aminobenzoate: step 1/2. In terms of biological role, catalyzes the condensation of para-aminobenzoate (pABA) with 6-hydroxymethyl-7,8-dihydropterin diphosphate (DHPt-PP) to form 7,8-dihydropteroate (H2Pte), the immediate precursor of folate derivatives. This is Dihydropteroate synthase type-1 (sulI) from Corynebacterium glutamicum (Brevibacterium saccharolyticum).